The sequence spans 223 residues: Pre-protein VI (223 aa).

Positions M1–G28 are excised as a propeptide. Positions A29–T53 are amphipathic alpha-helix essential for membrane lytic activity. The involved in endosomal membrane lysis stretch occupies residues N31 to N52. Positions G47–S73 are interaction with hexon protein. A Nuclear export signal motif is present at residues I66–V75. Disordered stretches follow at residues E136–R155 and P166–R203. Residues P138–V151 are compositionally biased toward pro residues. The span at P166–T182 shows a compositional bias: low complexity. Residues P189–R198 are compositionally biased toward basic residues. The Nuclear export signal motif lies at A204–A215. The interval L206–T212 is interaction with hexon protein. Residues G213–Y223 are binds to importin alpha/beta, involved in hexon nuclear import.

Belongs to the adenoviridae protein VI family. In terms of assembly, interacts with hexon protein; this interaction allows nuclear import of hexon trimers and possibly pre-capsid assembly. Interacts (via C-terminal NLS) with importin alpha/beta. As to quaternary structure, interacts (via PPxY motif) with host NEDD4 ubiquitine ligase; this interaction might play a role in virus intracellular transport during entry. Part of a complex composed of the core-capsid bridging protein, the endosome lysis protein VI and the hexon-linking protein VIII; these interactions bridge the virus core to the capsid. Interacts with peripentonal hexons; this interaction stabilizes the capsid by gluing two peripentonal hexons together and joining them with an adjacent group-of-nine hexon. Heterodimer with the viral protease; disulfide-linked. Interacts with the viral protease. In terms of processing, ubiquitinated by Nedd4 following partial capsid disassembly; which might play a role in intracellular virus movement during entry. Contains the major nuclear import and export signals. Proteolytically removed during virion maturation. The processing of the C-terminus turns the precursor into a mature viral structural protein and abrogates its ability to promote hexon import and act as a potential chaperone protein.

The protein localises to the host nucleus. It localises to the host cytoplasm. The protein resides in the virion. During virus assembly, promotes hexon trimers nuclear import through nuclear pore complexes via an importin alpha/beta-dependent mechanism. By analogy to herpesviruses capsid assembly, might act as a chaperone to promote the formation of the icosahedral capsid. Its function is as follows. Structural component of the virion that provides increased stability to the particle shell through its interaction with the core-capsid bridging protein and the hexon-linking protein VIII. Fibers shedding during virus entry into host cell allows the endosome lysis protein to be exposed as a membrane-lytic peptide. Exhibits pH-independent membrane fragmentation activity and probably mediates viral rapid escape from host endosome via organellar membrane lysis. It is not clear if it then remains partially associated with the capsid and involved in the intracellular microtubule-dependent transport of capsid to the nucleus, or if it is lost during endosomal penetration. Functionally, cofactor that activates the viral protease. Binds to viral protease in a 1:1 ratio. The sequence is that of Pre-protein VI from Fowl adenovirus A serotype 1 (strain CELO / Phelps) (FAdV-1).